Reading from the N-terminus, the 450-residue chain is Tubulin alpha-3C chain (450 aa).

An MREC motif motif is present at residues methionine 1–cysteine 4. Residue glutamine 11 coordinates GTP. Lysine 40 is modified (N6-acetyllysine). Glutamate 71, serine 140, glycine 144, threonine 145, threonine 179, asparagine 206, and asparagine 228 together coordinate GTP. Glutamate 71 is a Mg(2+) binding site. Glutamate 254 is a catalytic residue. A 3'-nitrotyrosine modification is found at tyrosine 282. Serine 439 is modified (phosphoserine). Tyrosine 450 carries the 3'-nitrotyrosine modification.

It belongs to the tubulin family. Dimer of alpha and beta chains. A typical microtubule is a hollow water-filled tube with an outer diameter of 25 nm and an inner diameter of 15 nM. Alpha-beta heterodimers associate head-to-tail to form protofilaments running lengthwise along the microtubule wall with the beta-tubulin subunit facing the microtubule plus end conferring a structural polarity. Microtubules usually have 13 protofilaments but different protofilament numbers can be found in some organisms and specialized cells. Mg(2+) is required as a cofactor. In terms of processing, some glutamate residues at the C-terminus are polyglutamylated, resulting in polyglutamate chains on the gamma-carboxyl group. Polyglutamylation plays a key role in microtubule severing by spastin (SPAST). SPAST preferentially recognizes and acts on microtubules decorated with short polyglutamate tails: severing activity by SPAST increases as the number of glutamates per tubulin rises from one to eight, but decreases beyond this glutamylation threshold. Glutamylation is also involved in cilia motility. Some glutamate residues at the C-terminus are monoglycylated but not polyglycylated due to the absence of functional TTLL10 in human. Monoglycylation is mainly limited to tubulin incorporated into cilia and flagella axonemes, which is required for their stability and maintenance. Flagella glycylation controls sperm motility. Both polyglutamylation and monoglycylation can coexist on the same protein on adjacent residues, and lowering glycylation levels increases polyglutamylation, and reciprocally. Post-translationally, acetylation of alpha chains at Lys-40 is located inside the microtubule lumen. This modification has been correlated with increased microtubule stability, intracellular transport and ciliary assembly. In terms of processing, methylation of alpha chains at Lys-40 is found in mitotic microtubules and is required for normal mitosis and cytokinesis contributing to genomic stability. Nitration of Tyr-450 is irreversible and interferes with normal dynein intracellular distribution. Post-translationally, undergoes a tyrosination/detyrosination cycle, the cyclic removal and re-addition of a C-terminal tyrosine residue by the enzymes tubulin tyrosine carboxypeptidase (MATCAP1/KIAA0895L, VASH1 or VASH2) and tubulin tyrosine ligase (TTL), respectively. In terms of processing, tyrosination promotes microtubule interaction with CAP-Gly domain-containing proteins such as CLIP1, CLIP2 and DCTN1. Tyrosination regulates the initiation of dynein-dynactin motility via interaction with DCTN1, which brings the dynein-dynactin complex into contact with microtubules. In neurons, tyrosinated tubulins mediate the initiation of retrograde vesicle transport. Detyrosination is involved in metaphase plate congression by guiding chromosomes during mitosis: detyrosination promotes interaction with CENPE, promoting pole-proximal transport of chromosomes toward the equator. Detyrosination increases microtubules-dependent mechanotransduction in dystrophic cardiac and skeletal muscle. In cardiomyocytes, detyrosinated microtubules are required to resist to contractile compression during contraction: detyrosination promotes association with desmin (DES) at force-generating sarcomeres, leading to buckled microtubules and mechanical resistance to contraction. Expressed in testis.

Its subcellular location is the cytoplasm. It localises to the cytoskeleton. The catalysed reaction is GTP + H2O = GDP + phosphate + H(+). In terms of biological role, tubulin is the major constituent of microtubules, a cylinder consisting of laterally associated linear protofilaments composed of alpha- and beta-tubulin heterodimers. Microtubules grow by the addition of GTP-tubulin dimers to the microtubule end, where a stabilizing cap forms. Below the cap, tubulin dimers are in GDP-bound state, owing to GTPase activity of alpha-tubulin. The protein is Tubulin alpha-3C chain (TUBA3C) of Homo sapiens (Human).